The sequence spans 334 residues: Replication-associated protein (334 aa).

A CRESS-DNA virus Rep endonuclease domain is found at 9 to 111; the sequence is RLQSKYVFLT…DGDIKTRGDF (103 aa). The RCR-1 signature appears at 16–19; that stretch reads FLTY. The a divalent metal cation site is built by Glu50, His58, and His60. The short motif at 58–60 is the RCR-2 element; the sequence is HYH. Tyr98 acts as the For DNA cleavage activity in catalysis. Positions 98–101 match the RCR-3 motif; it reads YISK. Residue Asp102 coordinates a divalent metal cation. Residues 160–172 form an oligomerization region; that stretch reads SANKLFPPQPEQY. 213-220 contacts ATP; it reads GPTRTGKT. The transactivation stretch occupies residues 236–254; it reads IDFTNYDEHATYNIIDDIP. A Nuclear localization signal motif is present at residues 276 to 286; it reads KYGKKKKIKGG.

The protein belongs to the geminiviridae Rep protein family. In terms of assembly, homooligomer. Rep binds to repeated DNA motifs (iterons). Forms the O-complex, which is a Rep-DNA complex involved in the initiation of RCR. Part of the C- and V-complexes which are RepA-Rep-DNA complexes involved in the c-sense and v-sense transcription. It depends on Mg(2+) as a cofactor. Mn(2+) serves as cofactor.

The protein resides in the host nucleus. Essential for the replication of viral ssDNA. The closed circular ssDNA genome is first converted to a superhelical dsDNA. Rep binds a specific region at the genome origin of replication. It introduces an endonucleolytic nick within the conserved sequence 5'-TAATATTAC-3' in the intergenic region of the genome present in all geminiviruses, thereby initiating the rolling circle replication (RCR). Following cleavage, binds covalently to the 5'-phosphate of DNA as a tyrosyl ester. The cleavage gives rise to a free 3'-OH that serves as a primer for the cellular DNA polymerase. The polymerase synthesizes the (+) strand DNA by rolling circle mechanism. After one round of replication, a Rep-catalyzed nucleotidyl transfer reaction releases a circular single-stranded virus genome, thereby terminating the replication. Displays origin-specific DNA cleavage, nucleotidyl transferase, ATPase and helicase activities. Acts a an inhibitor of C-sense gene transcription. The polypeptide is Replication-associated protein (Phaseolus vulgaris (Kidney bean)).